A 151-amino-acid polypeptide reads, in one-letter code: Deoxyuridine 5'-triphosphate nucleotidohydrolase (151 aa).

Residues 70–72 (RSG), N83, 87–89 (LID), and M97 contribute to the substrate site.

The protein belongs to the dUTPase family. The cofactor is Mg(2+).

The catalysed reaction is dUTP + H2O = dUMP + diphosphate + H(+). It functions in the pathway pyrimidine metabolism; dUMP biosynthesis; dUMP from dCTP (dUTP route): step 2/2. Its function is as follows. This enzyme is involved in nucleotide metabolism: it produces dUMP, the immediate precursor of thymidine nucleotides and it decreases the intracellular concentration of dUTP so that uracil cannot be incorporated into DNA. This Mannheimia succiniciproducens (strain KCTC 0769BP / MBEL55E) protein is Deoxyuridine 5'-triphosphate nucleotidohydrolase.